The chain runs to 410 residues: Magnesium transporter NIPA3 (410 aa).

Residues 1–67 (MGAQVRLPPG…ISANVENKYS (67 aa)) are Extracellular-facing. 4 N-linked (GlcNAc...) asparagine glycosylation sites follow: asparagine 25, asparagine 35, asparagine 50, and asparagine 55. The chain crosses the membrane as a helical span at residues 68–88 (LYVGLVLAVSSSIFIGSSFIL). The Cytoplasmic segment spans residues 89-114 (KKKGLLQLASKGFTRAGQGGHSYLKE). Residues 115–135 (WLWWVGLLSMGAGEAANFAAY) traverse the membrane as a helical segment. A topological domain (extracellular) is located at residue alanine 136. Residues 137–157 (FAPATLVTPLGALSVLISAIL) traverse the membrane as a helical segment. Residues 158–165 (SSYFLNEH) are Cytoplasmic-facing. A helical transmembrane segment spans residues 166–186 (LNIHGKIGCILSILGSTVMVI). At 187-207 (HAPQEEEVTSLHEMEMKLRDP) the chain is on the extracellular side. The chain crosses the membrane as a helical span at residues 208–228 (GFISFAVIITVISLVLILIVA). At 229-233 (PKKGQ) the chain is on the cytoplasmic side. The chain crosses the membrane as a helical span at residues 234 to 254 (TNILVYISICSLIGAFSVSSV). Residues 255-273 (KGLGIAIKELIEWKPVYKH) lie on the Extracellular side of the membrane. The helical transmembrane segment at 274 to 294 (PLVFVLLAVLVLSVTTQINYL) threads the bilayer. Residues 295 to 305 (NKALDTFNTSL) lie on the Cytoplasmic side of the membrane. A helical transmembrane segment spans residues 306-326 (VTPIYYVFFTSMVVTCSAILF). Residues 327-336 (QEWYGMTAGD) lie on the Extracellular side of the membrane. Residues 337-357 (IIGTLSGFFTIIIGIFLLHAF) form a helical membrane-spanning segment. The Cytoplasmic portion of the chain corresponds to 358-410 (KNTDITWSELTSTAKKEAVSLNVNENNYVLLENLECSAPGYNDDVTLFSRTDD).

This sequence belongs to the NIPA family. Expressed in the pancreatic islets.

The protein localises to the golgi apparatus membrane. It catalyses the reaction Mg(2+)(in) = Mg(2+)(out). Acts as a Mg(2+) transporter. Can also transport other divalent cations such as Fe(2+), Sr(2+), Ba(2+), Mn(2+), Cu(2+) and Co(2+) but to a much less extent than Mg(2+). The protein is Magnesium transporter NIPA3 (NIPAL1) of Homo sapiens (Human).